The primary structure comprises 185 residues: Ribosome-recycling factor (185 aa).

The segment at 137–158 (DELKKLEKDHTASEDEVKRAQD) is disordered.

It belongs to the RRF family.

Its subcellular location is the cytoplasm. In terms of biological role, responsible for the release of ribosomes from messenger RNA at the termination of protein biosynthesis. May increase the efficiency of translation by recycling ribosomes from one round of translation to another. The chain is Ribosome-recycling factor from Desulfitobacterium hafniense (strain Y51).